A 251-amino-acid chain; its full sequence is Tyrosine phosphatase-like protein J3 (251 aa).

In terms of domain architecture, Tyrosine-protein phosphatase spans 26-251; sequence IADEYYTIVP…PVLQNSKRRE (226 aa).

It belongs to the protein-tyrosine phosphatase family.

The protein is Tyrosine phosphatase-like protein J3 (J4) of Microplitis demolitor (Parasitoid wasp).